The primary structure comprises 4351 residues: Protocadherin Fat 2 (4351 aa).

Residues 1–18 (MTLVLLGLAILLLHRAAC) form the signal peptide. Topologically, residues 19-4050 (EKSLEETIPP…IKRGDWGQQE (4032 aa)) are extracellular. 2 consecutive Cadherin domains span residues 34-148 (THSL…KPLF) and 149-256 (SPPS…PPAI). Residues Asn39, Asn210, Asn280, and Asn330 are each glycosylated (N-linked (GlcNAc...) asparagine). Cadherin domains lie at 363–458 (EKAV…APVF), 459–564 (NRSS…QPMF), 565–669 (EEVN…VPVQ), 716–820 (DHFP…PPRF), 821–925 (PPGG…PPQC), 926–1032 (ITEH…SPHF), 1033–1142 (SSFV…RPVF), 1138–1242 (SRPV…PPMF), 1243–1346 (SHKL…SSIP), 1350–1448 (DESY…RPQF), 1449–1555 (LQDH…SPHF), 1556–1660 (TQLR…APVF), 1661–1758 (SKDE…PPAF), 1759–1872 (GKPT…PPRF), 1873–1968 (SEQI…SLQF), 1969–2070 (DQDV…IPEF), 2071–2171 (QHLP…NPLF), 2172–2272 (QSPY…PPTF), 2273–2379 (SQLV…PPKF), 2380–2481 (REPQ…SPEF), 2482–2585 (QQNV…APQF), 2586–2692 (KASG…LPKF), 2693–2799 (SEPL…RPVF), 2800–2908 (EADP…PPRF), 2909–3013 (ASED…SPQC), 3014–3115 (SQLL…APRF), 3116–3220 (FPSH…LPIF), 3221–3323 (LNAE…HPRF), 3324–3428 (THDL…PPRF), 3429–3533 (FQLN…PPST), and 3534–3631 (LPLE…VPQQ). N-linked (GlcNAc...) asparagine glycosylation is found at Asn459, Asn568, Asn627, and Asn789. Asn996 is a glycosylation site (N-linked (GlcNAc...) asparagine). 3 N-linked (GlcNAc...) asparagine glycosylation sites follow: Asn1175, Asn1276, and Asn1417. N-linked (GlcNAc...) asparagine glycosylation is found at Asn1899, Asn1998, Asn2007, Asn2102, Asn2165, Asn2183, Asn2325, Asn2368, Asn2387, Asn2430, Asn2470, Asn2547, and Asn2597. N-linked (GlcNAc...) asparagine glycans are attached at residues Asn3127, Asn3278, and Asn3312. 8 N-linked (GlcNAc...) asparagine glycosylation sites follow: Asn3432, Asn3603, Asn3770, Asn3774, Asn3815, Asn3842, Asn3875, and Asn3906. In terms of domain architecture, Laminin G-like spans 3775–3946 (GTTLRFSGQS…RLETWALSQC (172 aa)). Disulfide bonds link Cys3914–Cys3946, Cys3953–Cys3964, Cys3958–Cys3974, and Cys3976–Cys3985. EGF-like domains are found at residues 3949–3986 (PGTACSQSPCLNGGSCSPALGSGYLCRCPPPFSGRNCE) and 3988–4024 (GRENCTSAPCQEGGTCVSSPEGTSCNCPHPYTGDRCE). The N-linked (GlcNAc...) asparagine glycan is linked to Asn3991. Cystine bridges form between Cys3992/Cys4003, Cys3997/Cys4012, and Cys4014/Cys4023. The chain crosses the membrane as a helical span at residues 4051–4071 (FLVITVALPLVIIATVGLLLY). Residues 4072–4351 (CRRRKSHKPV…DYGSCEEVMF (280 aa)) are Cytoplasmic-facing. The segment at 4316–4340 (VNGGPATGRSQPRAPPNYEGSDMVE) is disordered.

Homodimer. In terms of tissue distribution, cerebellum-specific expression. Expressed in thin parallel fibers of cerebellar granule cells.

The protein localises to the cell membrane. It localises to the cell junction. It is found in the golgi apparatus. The protein resides in the trans-Golgi network. In terms of biological role, involved in the regulation of cell migration. May be involved in mediating the organization of the parallel fibers of granule cells during cerebellar development. This chain is Protocadherin Fat 2 (Fat2), found in Rattus norvegicus (Rat).